The primary structure comprises 165 residues: Putative ankyrin repeat domain-containing protein 20A5 (165 aa).

ANK repeat units follow at residues 66 to 95 (QHRT…QIDI), 99 to 128 (ENRT…NPNL), and 132 to 161 (YGNT…NIEA).

This is Putative ankyrin repeat domain-containing protein 20A5 (ANKRD20A5P) from Homo sapiens (Human).